The sequence spans 235 residues: Proteasome subunit beta type-1 (235 aa).

A propeptide spanning residues 1-20 (MSRLGFEQFPDYQVPGMKHP) is cleaved from the precursor.

Belongs to the peptidase T1B family. In terms of assembly, the 26S proteasome consists of a 20S proteasome core and two 19S regulatory subunits. The 20S proteasome core is composed of 28 subunits that are arranged in four stacked rings, resulting in a barrel-shaped structure. The two end rings are each formed by seven alpha subunits, and the two central rings are each formed by seven beta subunits. The catalytic chamber with the active sites is on the inside of the barrel.

It is found in the cytoplasm. Its subcellular location is the nucleus. Functionally, non-catalytic component of the proteasome, a multicatalytic proteinase complex which is characterized by its ability to cleave peptides with Arg, Phe, Tyr, Leu, and Glu adjacent to the leaving group at neutral or slightly basic pH. The proteasome has an ATP-dependent proteolytic activity. The chain is Proteasome subunit beta type-1 (Prosbeta6) from Drosophila melanogaster (Fruit fly).